We begin with the raw amino-acid sequence, 337 residues long: MVQWISPLDNSIVIASKVKILRNIKGIKFTKLLNEEEFNDLLSMVLGRLKEIDILDKCYVVKLKDGEEKIIDYYKENFGLIKYFENKDNLIFIMNKNGEFNILLNEEEHIGIECTNSGLSLREVYSKVDKLDDLIEEKIHYSFDSELGYLTSNIKNLGTALRTKVFIHLPLLSSNNLIRIIKNALKEEGITLKSIYNSGNKDVGNIYEVSNIKTLGMSEKDILDSLISITNKLILREKNQRDNLSKDEYIELKDDILRALGVLRNTYSIDRDEALKYLSYVRLGVELGIIEDLTLKPVNSAMIEIQPDMINNSSIKRRDIQSLKIERAKIIRNALNT.

Positions 12–240 constitute a Phosphagen kinase C-terminal domain; the sequence is IVIASKVKIL…NKLILREKNQ (229 aa). ATP is bound by residues 15–19, 162–166, and 193–198; these read ASKVK, RTKVF, and KSIYNS.

It belongs to the ATP:guanido phosphotransferase family.

The enzyme catalyses L-arginyl-[protein] + ATP = N(omega)-phospho-L-arginyl-[protein] + ADP + H(+). Its function is as follows. Catalyzes the specific phosphorylation of arginine residues in proteins. This is Protein-arginine kinase from Clostridium perfringens (strain 13 / Type A).